A 239-amino-acid chain; its full sequence is ATP-dependent dethiobiotin synthetase BioD (239 aa).

15–20 (EIGKTF) lines the ATP pocket. Thr19 contacts Mg(2+). Lys40 is a catalytic residue. Residues Asp57, 118 to 121 (EGAG), and 178 to 179 (NH) each bind ATP. Mg(2+)-binding residues include Asp57 and Glu118.

It belongs to the dethiobiotin synthetase family. In terms of assembly, homodimer. Mg(2+) serves as cofactor.

Its subcellular location is the cytoplasm. The catalysed reaction is (7R,8S)-7,8-diammoniononanoate + CO2 + ATP = (4R,5S)-dethiobiotin + ADP + phosphate + 3 H(+). Its pathway is cofactor biosynthesis; biotin biosynthesis; biotin from 7,8-diaminononanoate: step 1/2. Functionally, catalyzes a mechanistically unusual reaction, the ATP-dependent insertion of CO2 between the N7 and N8 nitrogen atoms of 7,8-diaminopelargonic acid (DAPA, also called 7,8-diammoniononanoate) to form a ureido ring. The sequence is that of ATP-dependent dethiobiotin synthetase BioD from Burkholderia lata (strain ATCC 17760 / DSM 23089 / LMG 22485 / NCIMB 9086 / R18194 / 383).